Here is a 433-residue protein sequence, read N- to C-terminus: Shikimate O-hydroxycinnamoyltransferase (433 aa).

The active-site Proton acceptor is the His153. Residues 252–255, 284–290, and 370–373 contribute to the 4-coumaroyl-CoA site; these read SSYE, DGRSRLR, and SWVR. The Proton acceptor role is filled by Asp380.

Belongs to the plant acyltransferase family.

It catalyses the reaction shikimate + 4-coumaroyl-CoA = trans-4-coumaroylshikimate + CoA. Acyltransferase involved in the biosynthesis of lignin. Accepts caffeoyl-CoA and p-coumaroyl-CoA as substrates and transfers the acyl group on both shikimate and quinate acceptors. The polypeptide is Shikimate O-hydroxycinnamoyltransferase (HST) (Arabidopsis thaliana (Mouse-ear cress)).